A 152-amino-acid polypeptide reads, in one-letter code: Histone deacetylase complex subunit SAP18 (152 aa).

The segment at 1–38 (MAEAARRQGGGRPLPPPPRGVNQQPPRPKPEPVDREKT) is disordered. A compositionally biased stretch (basic and acidic residues) spans 28-38 (PKPEPVDREKT).

It belongs to the SAP18 family. In terms of assembly, interacts with SIN3, ERF3, ERF4 and HDA19. As to expression, ubiquitous, with low level in flowers.

Functionally, links the histone deacetylase complex to transcriptional repressors bound to chromatin. Involved in the tethering of the SIN3 complex to core histone proteins. This is Histone deacetylase complex subunit SAP18 from Arabidopsis thaliana (Mouse-ear cress).